The sequence spans 527 residues: Triostin synthetase I (527 aa).

187–188 contacts ATP; that stretch reads GG. 230–231 contacts substrate; the sequence is HQ. ATP contacts are provided by residues 300–302, aspartate 406, arginine 421, and lysine 512; that span reads SAP. Lysine 512 is a binding site for substrate.

Belongs to the ATP-dependent AMP-binding enzyme family. In terms of assembly, monomer.

Involved in triostin biosynthesis. Activates quinoxaline-2-carboxylic acid (QA) via catalysis of the ATP-pyrophosphate exchange reaction dependent on QA, and the formation of the corresponding adenylate. Also activates structural analogs of QA such as quinoline-2-carboxylic acid and thieno[3,2-b]pyridine-5-carboxylic acid, but not quinoline-3-carboxylic acid, quinoline-4-carboxylic acid, pyridine-2-carboxylic acid or 2-pyrazinecarboxylic acid. This is Triostin synthetase I (trsA) from Streptomyces triostinicus.